The chain runs to 324 residues: Malate dehydrogenase (324 aa).

NAD(+) contacts are provided by residues 21–26 and D45; that span reads GAGRVG. Substrate-binding residues include R94 and R100. NAD(+) contacts are provided by residues N107 and 130 to 132; that span reads VTN. Residues N132 and R163 each coordinate substrate. H187 serves as the catalytic Proton acceptor.

Belongs to the LDH/MDH superfamily. MDH type 3 family.

It catalyses the reaction (S)-malate + NAD(+) = oxaloacetate + NADH + H(+). Functionally, catalyzes the reversible oxidation of malate to oxaloacetate. This chain is Malate dehydrogenase, found in Trichormus variabilis (strain ATCC 29413 / PCC 7937) (Anabaena variabilis).